A 99-amino-acid polypeptide reads, in one-letter code: HssA/B-like protein 42 (99 aa).

Residues 1–29 are disordered; the sequence is MTLFSSISSMSTSMSGSKSSISSFGSGTS.

The protein belongs to the hssA/B family.

In Dictyostelium discoideum (Social amoeba), this protein is HssA/B-like protein 42 (hssl42).